Consider the following 376-residue polypeptide: Palmitoyl-[acyl-carrier-protein] 4-desaturase 2, chloroplastic (376 aa).

A chloroplast-targeting transit peptide spans 1–33 (MELHLALRASPLPAADPGRRPPPPRGNFATNCT). Residues E114, E149, H152, E202, E235, and H238 each contribute to the Fe cation site.

This sequence belongs to the fatty acid desaturase type 2 family. Homodimer. It depends on Fe(2+) as a cofactor. As to expression, preferentially expressed in the flower labellum.

The protein localises to the plastid. It localises to the chloroplast stroma. The enzyme catalyses hexadecanoyl-[ACP] + 2 reduced [2Fe-2S]-[ferredoxin] + O2 + 2 H(+) = (4Z)-hexadecenoyl-[ACP] + 2 oxidized [2Fe-2S]-[ferredoxin] + 2 H2O. The catalysed reaction is octadecanoyl-[ACP] + 2 reduced [2Fe-2S]-[ferredoxin] + O2 + 2 H(+) = (9Z)-octadecenoyl-[ACP] + 2 oxidized [2Fe-2S]-[ferredoxin] + 2 H2O. Its pathway is lipid metabolism; fatty acid metabolism. In terms of biological role, converts stearoyl-ACP to oleoyl-ACP by introduction of a cis double bond between carbons 9 and 10 of the acyl chain. Converts palmitoyl-ACP to (4Z)-hexadec-4-enoyl-ACP by introduction of a cis double bond between carbons 4 and 5 of the acyl chain. Catalyzes the desaturation of saturated fatty acid 18:0 and 16:0 to generate 18:1 (delta-9) and 16:1 (delta-4) intermediates, expected to give rise to 9-alkenes and 12-alkenes, respectively. The chain is Palmitoyl-[acyl-carrier-protein] 4-desaturase 2, chloroplastic (SAD2) from Ophrys sphegodes (Early spider orchid).